The sequence spans 364 residues: Zinc transporter 3 (364 aa).

The N-terminal stretch at 1 to 23 (MGAKKHTLQVLPWLLLFAQHTAA) is a signal peptide. Topologically, residues 24–44 (SACDCANTTDGADRQGAMKLK) are extracellular. N30 carries N-linked (GlcNAc...) asparagine glycosylation. A helical membrane pass occupies residues 45-65 (LIAIASILAAGAAGVLVPVIG). At 66–76 (RSMAALRPDGD) the chain is on the cytoplasmic side. The helical transmembrane segment at 77–97 (IFFAVKAFAAGVILATGMVHI) threads the bilayer. Residues 98–119 (LPAAFDALTSPCLKRGGGDRNP) lie on the Extracellular side of the membrane. The chain crosses the membrane as a helical span at residues 120 to 140 (FPFAGLVSMSAAVSTMVVDSL). Topologically, residues 141–213 (AAGYYHRSQF…ESIRHKVVSQ (73 aa)) are cytoplasmic. The chain crosses the membrane as a helical span at residues 214-234 (VLELGILVHSVIIGVSLGASV). Topologically, residues 235-241 (RPSTIRP) are extracellular. Residues 242–262 (LVGALSFHQFFEGVGLGGCIV) form a helical membrane-spanning segment. Residues 263–271 (QANFKVRAT) lie on the Cytoplasmic side of the membrane. Residues 272 to 292 (VIMAIFFSLTAPVGIVLGIAI) form a helical membrane-spanning segment. The Extracellular segment spans residues 293–303 (SSSYNVHSSTA). The chain crosses the membrane as a helical span at residues 304-324 (FVVEGVFNSASAGILIYMSLV). Topologically, residues 325-343 (DLLATDFNNPKLQINTKLQ) are cytoplasmic. A helical membrane pass occupies residues 344–364 (LMAYLALFLGAGLMSMLAIWA).

The protein belongs to the ZIP transporter (TC 2.A.5) family. Expressed in vascular bundles of stems.

The protein resides in the cell membrane. Its function is as follows. Zinc transporter that may mediate zinc uptake from the rhizosphere. Seems specific to zinc ions and may not transport other divalent cations. In Oryza sativa subsp. japonica (Rice), this protein is Zinc transporter 3 (ZIP3).